Reading from the N-terminus, the 501-residue chain is uncharacterized protein (501 aa).

Disordered stretches follow at residues 179-404 and 480-501; these read EKTS…DETA and SDDT…DDSD. Over residues 191 to 200 the composition is skewed to basic and acidic residues; it reads SRNESQDKSR. Residues 201–214 show a composition bias toward basic residues; sequence DKSRKKVCNTHKNK. Positions 215–226 are enriched in basic and acidic residues; the sequence is KTLDNVKPDKNI. The span at 231–274 shows a compositional bias: low complexity; that stretch reads SSNKFTTNKPKSNKNSSDSDGSTKTTKSTRSTKSTKSSKSQKST. Over residues 304–316 the composition is skewed to basic and acidic residues; the sequence is NPKESINHKKNDS. Over residues 333 to 352 the composition is skewed to polar residues; it reads DSTNCRKSNRTTTRDVTNSD. Acidic residues predominate over residues 379–403; it reads EQSDLTEDETEENVSEEDETEEDET.

This is an uncharacterized protein from Acanthamoeba polyphaga mimivirus (APMV).